The chain runs to 442 residues: Transforming growth factor beta-2 proprotein (442 aa).

A signal peptide spans 1 to 20 (MHYCVLRTFLLLHLVPVALS). N-linked (GlcNAc...) asparagine glycans are attached at residues Asn72, Asn168, and Asn269. 4 cysteine pairs are disulfide-bonded: Cys337–Cys346, Cys345–Cys408, Cys374–Cys439, and Cys378–Cys441.

The protein belongs to the TGF-beta family. As to quaternary structure, interacts with the serine proteases, HTRA1 and HTRA3. Interacts with ASPN. Interacts with MFAP5. Interacts with Transforming growth factor beta-2 (TGF-beta-2) chain; interaction is non-covalent and maintains (TGF-beta-2) in a latent state. Interacts with LRRC32/GARP; leading to regulate activation of TGF-beta-2. Interacts with NREP; the interaction results in a decrease in TGFB2 autoinduction. In terms of assembly, transforming growth factor beta-2: Homodimer; disulfide-linked. Transforming growth factor beta-2: Interacts with TGF-beta receptors (TGFBR1 and TGFBR2), leading to signal transduction. The precursor proprotein is cleaved in the Golgi apparatus to form Transforming growth factor beta-2 (TGF-beta-2) and Latency-associated peptide (LAP) chains, which remain non-covalently linked, rendering TGF-beta-2 inactive. As to expression, expressed in cardiomyocytes. In terms of tissue distribution, expressed in the aorta, primary bronchus, uterus, heart, skeletal muscle, sciatic nerve and spinal cord but not in the intestine.

The protein resides in the secreted. Its subcellular location is the extracellular space. It localises to the extracellular matrix. In terms of biological role, precursor of the Latency-associated peptide (LAP) and Transforming growth factor beta-2 (TGF-beta-2) chains, which constitute the regulatory and active subunit of TGF-beta-2, respectively. Functionally, required to maintain the Transforming growth factor beta-2 (TGF-beta-2) chain in a latent state during storage in extracellular matrix. Associates non-covalently with TGF-beta-2 and regulates its activation via interaction with 'milieu molecules', such as LTBP1 and LRRC32/GARP, that control activation of TGF-beta-2. Multifunctional protein that regulates various processes such as angiogenesis and heart development. Activation into mature form follows different steps: following cleavage of the proprotein in the Golgi apparatus, Latency-associated peptide (LAP) and Transforming growth factor beta-2 (TGF-beta-2) chains remain non-covalently linked rendering TGF-beta-2 inactive during storage in extracellular matrix. At the same time, LAP chain interacts with 'milieu molecules', such as LTBP1 and LRRC32/GARP, that control activation of TGF-beta-2 and maintain it in a latent state during storage in extracellular milieus. Once activated following release of LAP, TGF-beta-2 acts by binding to TGF-beta receptors (TGFBR1 and TGFBR2), which transduce signal. In Rattus norvegicus (Rat), this protein is Transforming growth factor beta-2 proprotein (Tgfb2).